A 402-amino-acid polypeptide reads, in one-letter code: uncharacterized protein (402 aa).

The N-terminal stretch at 1 to 44 (MLEKNLLPEILLAIHMPLNKGLTRVKAIVIIIVVIIAVIAGVVG) is a signal peptide. Residues 53-79 (NSVTTSSSSTTTSSSLSSTSISSSTTN) form a disordered region.

This sequence belongs to the bacterial solute-binding protein 1 family. WtpA subfamily.

This is an uncharacterized protein from Saccharolobus solfataricus (strain ATCC 35092 / DSM 1617 / JCM 11322 / P2) (Sulfolobus solfataricus).